A 3423-amino-acid polypeptide reads, in one-letter code: Genome polyprotein (3423 aa).

Residues 1-25 (MKNPKKKSGGFRIVNMLKRGVARVS) form a disordered region. The Cytoplasmic portion of the chain corresponds to 1–104 (MKNPKKKSGG…INARKEKKRR (104 aa)). Residues 37-72 (LLLGHGPIRMVLAILAFLRFTAIKPSLGLINRWGSV) are hydrophobic; homodimerization of capsid protein C. The propeptide at 105-122 (GTDTSVGIVGLLLTTAMA) is ER anchor for capsid protein C, removed in mature form by serine protease NS3. The chain crosses the membrane as a helical span at residues 105 to 125 (GTDTSVGIVGLLLTTAMAVEV). The Extracellular portion of the chain corresponds to 126 to 249 (TRRGNAYYMY…YTKHLIRVEN (124 aa)). N-linked (GlcNAc...) asparagine; by host glycosylation occurs at N192. The helical transmembrane segment at 250-269 (WIFRNPGFALAAAAIAWLLG) threads the bilayer. The Cytoplasmic segment spans residues 270-274 (SSTSQ). Residues 275 to 290 (KVIYLVMILLIAPAYS) traverse the membrane as a helical segment. At 291–745 (IRCIGVSNRD…HQIFGAAFKS (455 aa)) the chain is on the extracellular side. K328 is covalently cross-linked (Glycyl lysine isopeptide (Lys-Gly) (interchain with G-Cter in ubiquitin)). Disulfide bonds link C350/C406 and C382/C411. Residues 388–401 (DRGWGNGCGLFGKG) are fusion peptide. An N-linked (GlcNAc...) asparagine; by host glycan is attached at N444. 2 cysteine pairs are disulfide-bonded: C480/C581 and C598/C629. A Glycyl lysine isopeptide (Lys-Gly) (interchain with G-Cter in ubiquitin) cross-link involves residue K571. Residues 746-767 (LFGGMSWFSQILIGTLLVWLGL) form a helical membrane-spanning segment. Residues 768–773 (NTKNGS) lie on the Cytoplasmic side of the membrane. The helical transmembrane segment at 774 to 794 (ISLMCLALGGVLIFLSTAVSA) threads the bilayer. Topologically, residues 795-1177 (DVGCSVDFSK…EGLKKRMTTK (383 aa)) are lumenal. Disulfide bonds link C798–C809, C849–C937, C973–C1017, C1074–C1123, C1085–C1106, and C1107–C1110. Residues N924 and N1001 are each glycosylated (N-linked (GlcNAc...) asparagine; by host). The chain crosses the membrane as a helical span at residues 1178–1198 (IIISTSMAVLVAMILGGFSMS). The Cytoplasmic segment spans residues 1199–1220 (DLAKLAILMGATFAEMNTGGDV). Residues 1221–1241 (AHLALIAAFKVRPALLVSFIF) form a helical membrane-spanning segment. Over 1242–1270 (RANWTPRESMLLALASCLLQTAISALEGD) the chain is Lumenal. A helical membrane pass occupies residues 1271–1291 (LMVPINGFALAWLAIRAMVVP). The Cytoplasmic segment spans residues 1292–1295 (RTDN). Residues 1296-1316 (ITLAILAALTPLARGTLLVAW) traverse the membrane as a helical segment. Residues 1317–1345 (RAGLATCGGFMLLSLKGKGSVKKNLPFVM) are Lumenal-facing. A helical membrane pass occupies residues 1346 to 1366 (ALGLTAVRLVDPINVVGLLLL). The Cytoplasmic segment spans residues 1367–1373 (TRSGKRS). A helical membrane pass occupies residues 1374-1394 (WPPSEVLTAVGLICALAGGFA). Residues 1395–1397 (KAD) are Lumenal-facing. The helical transmembrane segment at 1398 to 1418 (IEMAGPMAAVGLLIVSYVVSG) threads the bilayer. Residues 1419–1472 (KSVDMYIERAGDITWEKDAEVTGNSPRLDVALDESGDFSLVEDDGPPMREIILK) are Cytoplasmic-facing. The interacts with and activates NS3 protease stretch occupies residues 1425–1464 (IERAGDITWEKDAEVTGNSPRLDVALDESGDFSLVEDDGP). Positions 1429 to 1451 (GDITWEKDAEVTGNSPRLDVALD) are disordered. An intramembrane region (helical) is located at residues 1473 to 1493 (VVLMAICGMNPIAIPFAAGAW). The Lumenal segment spans residues 1494–2170 (YVYVKTGKRS…KAAAAQLPET (677 aa)). In terms of domain architecture, Peptidase S7 spans 1503-1680 (SGALWDVPAP…RREEETPVEC (178 aa)). Residues H1553, D1577, and S1637 each act as charge relay system; for serine protease NS3 activity in the active site. Positions 1683-1839 (PSMLKKKQLT…DSNSPIMDTE (157 aa)) constitute a Helicase ATP-binding domain. Residues 1687–1690 (KKKQ) form an important for RNA-binding region. 1696-1703 (LHPGAGKT) provides a ligand contact to ATP. Residues 1787–1790 (DEAH) carry the DEAH box motif. Residues 1834–2013 (PIMDTEVEVP…GLIASLYRPE (180 aa)) form the Helicase C-terminal domain. K1891 is modified (N6-acetyllysine; by host). The chain crosses the membrane as a helical span at residues 2171–2191 (LETIMLLGLLGTVSLGIFFVL). At 2192-2195 (MRNK) the chain is on the lumenal side. The helical intramembrane region spans 2196 to 2216 (GIGKMGFGMVTLGASAWLMWL). The Cytoplasmic segment spans residues 2217-2218 (SE). Residues 2219-2239 (IEPARIACVLIVVFLLLVVLI) traverse the membrane as a helical segment. Residues 2240 to 2254 (PEPEKQRSPQDNQMA) are Lumenal-facing. Residues 2255-2269 (IIIMVAVGLLGLITA) constitute an intramembrane region (helical). At 2270-2307 (NELGWLERTKSDLSHLMGRREEGATIGFSMDIDLRPAS) the chain is on the lumenal side. An intramembrane region (helical) is located at residues 2308 to 2328 (AWAIYAALTTFITPAVQHAVT). Topologically, residues 2329–2344 (TSYNNYSLMAMATQAG) are lumenal. A helical membrane pass occupies residues 2345–2365 (VLFGMGKGMPFYAWDFGVPLL). The Cytoplasmic portion of the chain corresponds to 2366 to 2375 (MIGCYSQLTP). The helical transmembrane segment at 2376–2396 (LTLIVAIILLVAHYMYLIPGL) threads the bilayer. Topologically, residues 2397–2441 (QAAAARAAQKRTAAGIMKNPVVDGIVVTDIDTMTIDPQVEKKMGQ) are lumenal. Residues 2442 to 2462 (VLLIAVAVSSAILSRTAWGWG) traverse the membrane as a helical segment. Residues 2463–3423 (EAGALITAAT…GEEGSTPGVL (961 aa)) are Cytoplasmic-facing. The mRNA cap 0-1 NS5-type MT domain maps to 2521 to 2785 (GGGTGETLGE…DVNLGSGTRA (265 aa)). Residue 2533-2539 (KARLNQM) participates in GTP binding. S2576 contributes to the S-adenosyl-L-methionine binding site. The residue at position 2576 (S2576) is a Phosphoserine. K2581 serves as the catalytic For 2'-O-MTase activity. Residues 2597 to 2600 (VIDL) form an SUMO-interacting motif (SIM) region. S-adenosyl-L-methionine-binding residues include G2606, W2607, T2624, K2625, H2630, E2631, D2651, V2652, D2666, and I2667. D2666 (for 2'-O-MTase activity) is an active-site residue. 2669–2675 (ESSSSPE) contacts GTP. The active-site For 2'-O-MTase activity is the K2702. 2733–2735 (RNS) serves as a coordination point for GTP. The For 2'-O-MTase activity role is filled by E2738. Residue Y2740 participates in S-adenosyl-L-methionine binding. Residues 2908 to 2914 (KHKRPRV) carry the Nuclear localization signal (NLS) motif. Positions 2959, 2963, 2968, and 2971 each coordinate Zn(2+). The RdRp catalytic domain occupies 3049–3199 (GRMYADDTAG…KPIDDRFAHA (151 aa)). H3234, C3250, and C3369 together coordinate Zn(2+).

This sequence in the N-terminal section; belongs to the class I-like SAM-binding methyltransferase superfamily. mRNA cap 0-1 NS5-type methyltransferase family. In terms of assembly, homodimer. Interacts with host SERTAD3; this interaction promotes capsid protein C degradation. Interacts with host CAPRIN1; this interaction is probably linked to the inhibition of stress granules formation by the virus. Interacts with host G3BP1; this interaction is probably linked to the inhibition of stress granules formation by the virus. Forms heterodimers with envelope protein E in the endoplasmic reticulum and Golgi. Interacts with non-structural protein 2A. As to quaternary structure, homodimer; in the endoplasmic reticulum and Golgi. Interacts with host TYRO3, AXL and DC-SIGN proteins. Interacts with non-structural protein 2A. Interacts with host HAVCR1; this interaction likely mediates virus attachment to host cell. Interacts with host NCAM1. Interacts with host HSPA5. Interacts with Aedes aegypti SRPN25, APY and venom allergen-1 salivary proteins; the interactions do not affect Zika virus replication in human endothelial cells and keratinocytes. In terms of assembly, homodimer; Homohexamer when secreted. Interacts with host TBK1. Interacts with host USP8. Interacts with envelope protein E. Interacts with the structural protein prM/E complex, and the NS2B/NS3 protease complex. As to quaternary structure, forms a heterodimer with serine protease NS3. May form homooligomers. Interacts with human SPCS1. Interacts with non-structural protein 2A. In terms of assembly, forms a heterodimer with NS2B. Interacts with NS4B. Interacts with unphosphorylated RNA-directed RNA polymerase NS5; this interaction stimulates RNA-directed RNA polymerase NS5 guanylyltransferase activity. Interacts with non-structural protein 2A. Interacts with host SHFL; this interaction promotes NS3 degradation via a lysosome-dependent pathway. Interacts with host CEP63; this interaction disorganizes the centrosome and inhibits host innate immune response. May interact with host ANKLE2; the interaction may cause defects in brain development, such as microcephaly. May interact with host SRPRA and SEC61G. As to quaternary structure, interacts with serine protease NS3. Interacts with NS1. In terms of assembly, homodimer. Interacts with host STAT2; this interaction inhibits the phosphorylation of the latter, and, when all viral proteins are present (polyprotein), targets STAT2 for degradation. Interacts with host TBK1 and IKBKE; these interactions lead to the inhibition of the host RIG-I signaling pathway. Interacts with host PAF1 complex; the interaction may prevent the recruitment of the host PAF1 complex to interferon-responsive genes, and thus reduces the immune response. Interacts with serine protease NS3. Interacts with host KPNA2. Interacts with host ZSWIM8; this interaction allows STAT2 binding to ZSWIM8 and subsequent proteasomal degradation leading to inhibition of interferon signaling. Post-translationally, specific enzymatic cleavages in vivo yield mature proteins. Cleavages in the lumen of endoplasmic reticulum are performed by host signal peptidase, whereas cleavages in the cytoplasmic side are performed by serine protease NS3. Signal cleavage at the 2K-4B site requires a prior NS3 protease-mediated cleavage at the 4A-2K site. Cleaved in post-Golgi vesicles by a host furin, releasing the mature small envelope protein M, and peptide pr. This cleavage is incomplete as up to 30% of viral particles still carry uncleaved prM. In terms of processing, N-glycosylation plays a role in virulence in mammalian and mosquito hosts, but may have no effect on neurovirulence. Post-translationally, ubiquitination by host TRIM7 promotes virus attachment and fusion of the virus and the host endosome membrane. N-glycosylated. The excreted form is glycosylated, which is required for efficient secretion of the protein from infected cells. In terms of processing, ubiquitination by host TRIM22 leads to proteasomal degradation. Post-translationally, acetylated by host KAT5. Acetylation modulates NS3 RNA-binding and unwinding activities and plays an important positive role for viral replication. Phosphorylated on serines residues. This phosphorylation may trigger NS5 nuclear localization. In terms of processing, sumoylated, required for regulating IFN induced interferon stimulated genes/ISGs.

Its subcellular location is the virion. It is found in the host nucleus. The protein resides in the host cytoplasm. The protein localises to the host perinuclear region. It localises to the secreted. Its subcellular location is the virion membrane. It is found in the host endoplasmic reticulum membrane. The protein resides in the host cell surface. It carries out the reaction a 5'-end (5'-triphosphoguanosine)-ribonucleoside in mRNA + S-adenosyl-L-methionine = a 5'-end (N(7)-methyl 5'-triphosphoguanosine)-ribonucleoside in mRNA + S-adenosyl-L-homocysteine. The catalysed reaction is a 5'-end (N(7)-methyl 5'-triphosphoguanosine)-ribonucleoside in mRNA + S-adenosyl-L-methionine = a 5'-end (N(7)-methyl 5'-triphosphoguanosine)-(2'-O-methyl-ribonucleoside) in mRNA + S-adenosyl-L-homocysteine + H(+). The enzyme catalyses RNA(n) + a ribonucleoside 5'-triphosphate = RNA(n+1) + diphosphate. It catalyses the reaction Selective hydrolysis of -Xaa-Xaa-|-Yaa- bonds in which each of the Xaa can be either Arg or Lys and Yaa can be either Ser or Ala.. It carries out the reaction a ribonucleoside 5'-triphosphate + H2O = a ribonucleoside 5'-diphosphate + phosphate + H(+). The catalysed reaction is ATP + H2O = ADP + phosphate + H(+). Functionally, plays a role in virus budding by binding to the cell membrane and gathering the viral RNA into a nucleocapsid that forms the core of the mature virus particle. During virus entry, may induce genome penetration into the host cytoplasm after hemifusion induced by the surface proteins. Can migrate to the cell nucleus where it modulates host functions. Inhibits the integrated stress response (ISR) in the infected cell. Its function is as follows. Inhibits RNA silencing by interfering with host Dicer. In terms of biological role, prevents premature fusion activity of envelope proteins in trans-Golgi by binding to envelope protein E at pH 6.0. After virion release in extracellular space, gets dissociated from E dimers. Plays a role in host immune defense modulation and protection of envelope protein E during virion synthesis. PrM-E cleavage is inefficient, many virions are only partially matured and immature prM-E proteins could play a role in immune evasion. Contributes to fetal microcephaly in humans. Acts as a chaperone for envelope protein E during intracellular virion assembly by masking and inactivating envelope protein E fusion peptide. prM is the only viral peptide matured by host furin in the trans-Golgi network probably to avoid catastrophic activation of the viral fusion activity in acidic Golgi compartment prior to virion release. Functionally, may play a role in virus budding. Exerts cytotoxic effects by activating a mitochondrial apoptotic pathway through M ectodomain. May display a viroporin activity. Its function is as follows. Binds to host cell surface receptors and mediates fusion between viral and cellular membranes. Efficient virus attachment to cell is, at least in part, mediated by host HAVCR1 in a cell-type specific manner. In addition, host NCAM1 can also be used as entry receptor. Interaction with host HSPA5 plays an important role in the early stages of infection as well. Envelope protein is synthesized in the endoplasmic reticulum and forms a heterodimer with protein prM. The heterodimer plays a role in virion budding in the ER, and the newly formed immature particle is covered with 60 spikes composed of heterodimers between precursor prM and envelope protein E. The virion is transported to the Golgi apparatus where the low pH causes the dissociation of PrM-E heterodimers and formation of E homodimers. PrM-E cleavage is inefficient, many virions are only partially matured and immature prM-E proteins could play a role in immune evasion. In terms of biological role, plays a role in the inhibition of host RLR-induced interferon-beta activation by targeting TANK-binding kinase 1/TBK1. In addition, recruits the host deubiquitinase USP8 to cleave 'Lys-11'-linked polyubiquitin chains from caspase-1/CASP1 thus inhibiting its proteasomal degradation. In turn, stabilized CASP1 promotes cleavage of cGAS, which inhibits its ability to recognize mitochondrial DNA release and initiate type I interferon signaling. Component of the viral RNA replication complex that recruits genomic RNA, the structural protein prM/E complex, and the NS2B/NS3 protease complex to the virion assembly site and orchestrates virus morphogenesis. Also antagonizes the host alpha/beta interferon antiviral response. May disrupt adherens junction formation and thereby impair proliferation of radial cells in the host cortex. Functionally, required cofactor for the serine protease function of NS3. Its function is as follows. Displays three enzymatic activities: serine protease, NTPase and RNA helicase. NS3 serine protease, in association with NS2B, performs its autocleavage and cleaves the polyprotein at dibasic sites in the cytoplasm: C-prM, NS2A-NS2B, NS2B-NS3, NS3-NS4A, NS4A-2K and NS4B-NS5. NS3 RNA helicase binds RNA and unwinds dsRNA in the 3' to 5' direction. Leads to translation arrest when expressed ex vivo. Disrupts host centrosome organization in a CEP63-dependent manner to degrade host TBK1 and inhibits innate immune response. Inhibits the integrated stress response (ISR) in the infected cell. In terms of biological role, regulates the ATPase activity of the NS3 helicase activity. NS4A allows NS3 helicase to conserve energy during unwinding. Cooperatively with NS4B suppresses the Akt-mTOR pathway and leads to cellular dysregulation. By inhibiting host ANKLE2 functions, may cause defects in brain development, such as microcephaly. Also antagonizes the host MDA5-mediated induction of alpha/beta interferon antiviral response. Leads to translation arrest when expressed ex vivo. Inhibits the integrated stress response (ISR) in the infected cell. Functions as a signal peptide for NS4B and is required for the interferon antagonism activity of the latter. Functionally, induces the formation of ER-derived membrane vesicles where the viral replication takes place. Also plays a role in the inhibition of host RLR-induced interferon-beta production at TANK-binding kinase 1/TBK1 level. Cooperatively with NS4A suppresses the Akt-mTOR pathway and leads to cellular dysregulation. Its function is as follows. Replicates the viral (+) and (-) RNA genome, and performs the capping of genomes in the cytoplasm. Methylates viral RNA cap at guanine N-7 and ribose 2'-O positions. Once sufficient NS5 is expressed, binds to the cap-proximal structure and inhibits further translation of the viral genome. Besides its role in RNA genome replication, also prevents the establishment of a cellular antiviral state by blocking the interferon-alpha/beta (IFN-alpha/beta) signaling pathway. Mechanistically, interferes with host kinases TBK1 and IKKE upstream of interferon regulatory factor 3/IRF3 to inhibit the RIG-I pathway. Also antagonizes type I interferon signaling by targeting STAT2 for degradation by the proteasome thereby preventing activation of JAK-STAT signaling pathway. Mechanistically, acts as a scaffold protein to connect host ZSWIM8/CUL3 ligase complex and STAT2, leading to STAT2 degradation. Within the host nucleus, disrupts host SUMO1 and STAT2 co-localization with PML, resulting in PML degradation. May also reduce immune responses by preventing the recruitment of the host PAF1 complex to interferon-responsive genes. The sequence is that of Genome polyprotein from Zika virus (isolate ZIKV/Human/Cambodia/FSS13025/2010) (ZIKV).